The sequence spans 2963 residues: tRNA nuclease CdiA (2963 aa).

The first 29 residues, 1–29, serve as a signal peptide directing secretion; it reads MIPIYLRQKLISYALIYLVAIQPIMPVMA. The two-partner system transport domain (TPS) stretch occupies residues 35 to 320; it reads AQGSTALDKA…AQGNITLNSH (286 aa). Positions 573–1074 are FHA-1; that stretch reads GNVVAQEHAQ…MVLNTASLLN (502 aa). The interval 1075–1342 is receptor binding domain (RBD); the sequence is RRDGFSVTEK…KPLTRAQLSD (268 aa). The tract at residues 1343 to 1528 is YP domain; sequence YPLPDSNNGL…LAKAEQAHLQ (186 aa). Residues 1529–1751 form a periplasmic FHA-1 repeat (pFR) region; the sequence is GSVISGNKVE…ATLQAERDVN (223 aa). Basic and acidic residues predominate over residues 1759–1770; that stretch reads TRNQHIDSEDKT. Disordered stretches follow at residues 1759 to 1787 and 1992 to 2012; these read TRNQ…LTAS and SKSS…SASA. Positions 1762–2314 are FHA-2; sequence QHIDSEDKTT…DSDNYNSIQK (553 aa). Polar residues predominate over residues 1771–1782; it reads TGYTRSTLSSGG. Residues 2694 to 2697 carry the VEDN CT cleavage motif motif; the sequence is VEDN. The C-terminal effector domain (CT) stretch occupies residues 2694-2963; sequence VEDNNLSFGK…TGRVRNFHPN (270 aa).

It in the N-terminal section; belongs to the CdiA toxin family. This sequence in the C-terminal section; belongs to the bacterial EndoU family. As to quaternary structure, forms a 1:1 complex with cognate immunity protein CdiI.

The protein localises to the secreted. It localises to the target cell. The protein resides in the target cell cytoplasm. Functionally, toxic component of a toxin-immunity protein module, which functions as a cellular contact-dependent growth inhibition (CDI) system. CDI modules allow bacteria to communicate with and inhibit the growth of closely related neighboring bacteria in a contact-dependent fashion. Targeting of the CT domain (residues 2824-2963) in the absence of immunity protein inhibits cell growth and causes tRNA(UUC-Glu) cleavage in the anticodon loop; expression of cognate immunity protein CdiI-43969 neutralizes growth inhibition and tRNA(UUC-Glu) remains intact, whereas non-cognate immunity proteins do not confer protection from the toxic effects. In terms of biological role, the CdiA protein is thought to be exported from the cell through the central lumen of CdiB, the other half of its two-partner system (TPS). The TPS domain probably remains associated with CdiB while the FHA-1 domain forms an extended filament with the receptor-binding domain (RBD) at its extremity; in the secretion arrested state the C-terminus of the RBD and YP domains form a hairpin-like structure as the FHA-2, PT and CT domains are periplasmic. The YP domain is probably responsible for this arrest at the point where it re-enters the host cell periplasm. Upon binding to a target cell outer membrane receptor a signal is transmitted to activate secretion. The filament elongates slightly, the rest of CdiA is secreted and the FHA-2 domain becomes stably associated with the target cell's outer membrane where it facilitates entry of the toxic CT domain into the target cell periplasm. From there the toxic CT domain is cleaved and gains access to the target cell cytoplasm via an inner membrane protein. The protein is tRNA nuclease CdiA of Yersinia mollaretii (strain ATCC 43969 / DSM 18520 / CIP 103324 / CNY 7263 / WAIP 204).